Reading from the N-terminus, the 785-residue chain is uncharacterized protein (785 aa).

A PE domain is found at Met-1–Ala-93.

Belongs to the mycobacterial PE family. PGRS subfamily.

This is an uncharacterized protein from Mycobacterium tuberculosis (strain CDC 1551 / Oshkosh).